The following is a 195-amino-acid chain: MHSNTAVIALSALAALVPAALAGGNLGTANVQNACGKDVYLWSIADSAGEKMITLKDGETHSEQYRANSNGGGISIKMATNPDHKDISQFEYTVSEPQVFYDLSNIDGYPFAEGGVSIHPSDSSCPAVVCEGGVKECKEAYNQPKDDHATHGCPQETDLNVVLCAGGGSAGPKKMFKPVQEKAANRPRHPHARPE.

The signal sequence occupies residues 1-22 (MHSNTAVIALSALAALVPAALA). Intrachain disulfides connect cysteine 125/cysteine 153 and cysteine 130/cysteine 137. The disordered stretch occupies residues 171 to 195 (GPKKMFKPVQEKAANRPRHPHARPE). Residues 185-195 (NRPRHPHARPE) are compositionally biased toward basic residues.

Belongs to the thaumatin family.

It localises to the secreted. Functionally, might be involved in the inhibition of growth of fungal competitors and pathogenicity. The sequence is that of Antigenic thaumatin-like protein ARB_01183 from Arthroderma benhamiae (strain ATCC MYA-4681 / CBS 112371) (Trichophyton mentagrophytes).